The primary structure comprises 235 residues: Sugar fermentation stimulation protein homolog (235 aa).

Belongs to the SfsA family.

The protein is Sugar fermentation stimulation protein homolog of Allorhizobium ampelinum (strain ATCC BAA-846 / DSM 112012 / S4) (Agrobacterium vitis (strain S4)).